The chain runs to 440 residues: Chromosome partition protein MukF (440 aa).

A leucine-zipper region spans residues 208–236; sequence LSETSGTLRELQDTLEAAGDKLQANLLRI.

It belongs to the MukF family. Interacts, and probably forms a ternary complex, with MukE and MukB via its C-terminal region. The complex formation is stimulated by calcium or magnesium. It is required for an interaction between MukE and MukB.

The protein localises to the cytoplasm. Its subcellular location is the nucleoid. Its function is as follows. Involved in chromosome condensation, segregation and cell cycle progression. May participate in facilitating chromosome segregation by condensation DNA from both sides of a centrally located replisome during cell division. Not required for mini-F plasmid partitioning. Probably acts via its interaction with MukB and MukE. Overexpression results in anucleate cells. It has a calcium binding activity. In Shigella boydii serotype 18 (strain CDC 3083-94 / BS512), this protein is Chromosome partition protein MukF.